Reading from the N-terminus, the 426-residue chain is 3-isopropylmalate dehydratase large subunit (426 aa).

[4Fe-4S] cluster contacts are provided by C307, C367, and C370.

The protein belongs to the aconitase/IPM isomerase family. LeuC type 2 subfamily. Heterodimer of LeuC and LeuD. [4Fe-4S] cluster is required as a cofactor.

It carries out the reaction (2R,3S)-3-isopropylmalate = (2S)-2-isopropylmalate. Its pathway is amino-acid biosynthesis; L-leucine biosynthesis; L-leucine from 3-methyl-2-oxobutanoate: step 2/4. Functionally, catalyzes the isomerization between 2-isopropylmalate and 3-isopropylmalate, via the formation of 2-isopropylmaleate. This chain is 3-isopropylmalate dehydratase large subunit, found in Sulfurovum sp. (strain NBC37-1).